Reading from the N-terminus, the 293-residue chain is Ribosomal protein L11 methyltransferase (293 aa).

Positions 145, 166, 188, and 230 each coordinate S-adenosyl-L-methionine.

It belongs to the methyltransferase superfamily. PrmA family.

It is found in the cytoplasm. It catalyses the reaction L-lysyl-[protein] + 3 S-adenosyl-L-methionine = N(6),N(6),N(6)-trimethyl-L-lysyl-[protein] + 3 S-adenosyl-L-homocysteine + 3 H(+). Its function is as follows. Methylates ribosomal protein L11. The protein is Ribosomal protein L11 methyltransferase of Enterobacter sp. (strain 638).